The chain runs to 509 residues: Pituitary homeobox homolog Ptx1 (509 aa).

A compositionally biased stretch (low complexity) spans 70–98; that stretch reads NGAGSAGSAESATTTSTALSSGSTGSSTV. Disordered stretches follow at residues 70 to 125, 148 to 171, and 204 to 273; these read NGAG…SSVS, QDLVGGYSQHPHHTVVPPHTPKHE, and LNNF…HFTS. Residues 227-242 are compositionally biased toward polar residues; that stretch reads RSVNETTIKTENISSS. Residues 243-258 show a composition bias toward basic and acidic residues; the sequence is GHDEPMTTSGEEPKND. The span at 259–269 shows a compositional bias: basic residues; it reads KKNKRQRRQRT. Residues 262–322 constitute a DNA-binding region (homeobox); the sequence is KRQRRQRTHF…KNRRAKWRKR (61 aa). The short motif at 460 to 473 is the OAR element; the sequence is SSIATLRLKAKQHA. The short motif at 464-470 is the Nuclear localization signal element; that stretch reads TLRLKAK.

The protein belongs to the paired homeobox family. Bicoid subfamily.

Its subcellular location is the nucleus. Its function is as follows. Appears to control physiological cell functions rather than pattern formation during embryogenesis. The chain is Pituitary homeobox homolog Ptx1 (Ptx1) from Drosophila melanogaster (Fruit fly).